The chain runs to 581 residues: NADH-quinone oxidoreductase subunit C/D (581 aa).

The interval 1-172 is NADH dehydrogenase I subunit C; that stretch reads MSGAELISDL…PPFVMTAARF (172 aa). Residues 196–581 form an NADH dehydrogenase I subunit D region; the sequence is ELMILNYGPH…IDYVMSDVDR (386 aa).

It in the N-terminal section; belongs to the complex I 30 kDa subunit family. This sequence in the C-terminal section; belongs to the complex I 49 kDa subunit family. In terms of assembly, NDH-1 is composed of 13 different subunits. Subunits NuoB, CD, E, F, and G constitute the peripheral sector of the complex.

It localises to the cell inner membrane. The enzyme catalyses a quinone + NADH + 5 H(+)(in) = a quinol + NAD(+) + 4 H(+)(out). In terms of biological role, NDH-1 shuttles electrons from NADH, via FMN and iron-sulfur (Fe-S) centers, to quinones in the respiratory chain. The immediate electron acceptor for the enzyme in this species is believed to be ubiquinone. Couples the redox reaction to proton translocation (for every two electrons transferred, four hydrogen ions are translocated across the cytoplasmic membrane), and thus conserves the redox energy in a proton gradient. This chain is NADH-quinone oxidoreductase subunit C/D, found in Rhodopseudomonas palustris (strain BisA53).